A 427-amino-acid polypeptide reads, in one-letter code: Gamma-glutamyl phosphate reductase (427 aa).

It belongs to the gamma-glutamyl phosphate reductase family.

The protein localises to the cytoplasm. It catalyses the reaction L-glutamate 5-semialdehyde + phosphate + NADP(+) = L-glutamyl 5-phosphate + NADPH + H(+). It participates in amino-acid biosynthesis; L-proline biosynthesis; L-glutamate 5-semialdehyde from L-glutamate: step 2/2. In terms of biological role, catalyzes the NADPH-dependent reduction of L-glutamate 5-phosphate into L-glutamate 5-semialdehyde and phosphate. The product spontaneously undergoes cyclization to form 1-pyrroline-5-carboxylate. The protein is Gamma-glutamyl phosphate reductase of Rhizobium rhizogenes (strain K84 / ATCC BAA-868) (Agrobacterium radiobacter).